The following is a 232-amino-acid chain: Rho-related GTP-binding protein Rho6 (232 aa).

GTP-binding positions include 23–28 (QCGKTA), 38–45 (YPETYVPT), 67–71 (DTSGS), 125–128 (CKTD), and 169–170 (AF). Positions 42–50 (YVPTVFENY) match the Effector region motif. Position 229 is a cysteine methyl ester (cysteine 229). Cysteine 229 carries S-geranylgeranyl cysteine lipidation. The propeptide at 230 to 232 (SIM) is removed in mature form.

It belongs to the small GTPase superfamily. Rho family. In terms of assembly, binds GRB7 and PLXNB1. Interacts with PLXNA2. Interacts with UBXD5.

It is found in the cell membrane. It localises to the cytoplasm. The protein localises to the cytoskeleton. Its function is as follows. Lacks intrinsic GTPase activity. Has a low affinity for GDP, and constitutively binds GTP. Controls rearrangements of the actin cytoskeleton. Induces the Rac-dependent neuritic process formation in part by disruption of the cortical actin filaments. Causes the formation of many neuritic processes from the cell body with disruption of the cortical actin filaments. In Bos taurus (Bovine), this protein is Rho-related GTP-binding protein Rho6 (RND1).